A 596-amino-acid polypeptide reads, in one-letter code: Probable tripeptidyl-peptidase SED2 (596 aa).

Residues 1 to 16 (MRLLKFVCLLASVAAA) form the signal peptide. Positions 17-203 (KPTPGASHKV…LESMSVEEFA (187 aa)) are cleaved as a propeptide — removed in mature form. A Peptidase S53 domain is found at 210-596 (LVTTACLREL…NFQALTKVLP (387 aa)). N-linked (GlcNAc...) asparagine glycosylation occurs at Asn265. Residues Glu286 and Asp290 each act as charge relay system in the active site. N-linked (GlcNAc...) asparagine glycosylation occurs at Asn403. The active-site Charge relay system is Ser501. Residues Asp543 and Ile544 each contribute to the Ca(2+) site. Residue Asn572 is glycosylated (N-linked (GlcNAc...) asparagine). Ca(2+) is bound by residues Gly576 and Asp578.

It depends on Ca(2+) as a cofactor.

It localises to the secreted. Its subcellular location is the extracellular space. The catalysed reaction is Release of an N-terminal tripeptide from a polypeptide.. In terms of biological role, secreted tripeptidyl-peptidase which degrades proteins at acidic pHs and is involved in virulence. This is Probable tripeptidyl-peptidase SED2 (SED2) from Arthroderma benhamiae (strain ATCC MYA-4681 / CBS 112371) (Trichophyton mentagrophytes).